Here is a 350-residue protein sequence, read N- to C-terminus: Ribonuclease H2 subunit B (350 aa).

The segment covering 134–151 (QDYSNSSDTGENQKSNSK) has biased composition (polar residues). Residues 134–153 (QDYSNSSDTGENQKSNSKTN) are disordered.

This sequence belongs to the RNase H2 subunit B family. Highly divergent. The RNase 2 complex is a heterotrimer composed of the catalytic subunit RNH201 and of the non-catalytic subunits RNH202 and RNH203.

Its subcellular location is the nucleus. Its function is as follows. Non catalytic subunit of RNase H2, an endonuclease that specifically degrades the RNA of RNA:DNA hybrids. Participates in DNA replication, possibly by mediating the removal of lagging-strand Okazaki fragment RNA primers during DNA replication. Mediates the excision of single ribonucleotides from DNA:RNA duplexes. The sequence is that of Ribonuclease H2 subunit B (RNH202) from Saccharomyces cerevisiae (strain ATCC 204508 / S288c) (Baker's yeast).